Here is a 428-residue protein sequence, read N- to C-terminus: MKKITAAKKGLKGQVTVPGDKSISHRALILGALAEGITEIENFLVAQDTLATLNCLEKYGVRIERRDTFVRVFGTAQNFSEPQDVLDAQNSGTTLRLLSGVAATFPFVSVFTGDASLRRRPMKRVLEPLTQMGARVLARGQGDYAPFAIKGGKLRGQDFILKKASAQVKSALLLAGLRAEGNTSVTEPQLSRDHTERMLVGFGAKIKREGLRVEISGGQKLLGQKVIVPGDFSTASFFIVAALIVPDSHLIIKNVGLNPTRTGLLTVLKEMGANIQILNFHENSGEPVGDLEVKYSPLKAVEVPPEIVPAMIDEFPILAVAMALAYGESKVRGAEELRVKESDRIKSIVSEFSKMGVAVKELPDGFIISGGNKILGTTVDSHHDHRIAMSLAVLGLTAAGTTEILNADAVAISYPEFFQQLTKLTEGA.

3-phosphoshikimate is bound by residues Lys-21, Ser-22, and Arg-26. A phosphoenolpyruvate-binding site is contributed by Lys-21. Phosphoenolpyruvate-binding residues include Gly-92 and Arg-120. 3-phosphoshikimate is bound by residues Ser-165, Gln-167, Asp-313, and Lys-340. Gln-167 contacts phosphoenolpyruvate. Asp-313 serves as the catalytic Proton acceptor. Arg-344 and Arg-386 together coordinate phosphoenolpyruvate.

The protein belongs to the EPSP synthase family. Monomer.

The protein localises to the cytoplasm. It carries out the reaction 3-phosphoshikimate + phosphoenolpyruvate = 5-O-(1-carboxyvinyl)-3-phosphoshikimate + phosphate. Its pathway is metabolic intermediate biosynthesis; chorismate biosynthesis; chorismate from D-erythrose 4-phosphate and phosphoenolpyruvate: step 6/7. Its function is as follows. Catalyzes the transfer of the enolpyruvyl moiety of phosphoenolpyruvate (PEP) to the 5-hydroxyl of shikimate-3-phosphate (S3P) to produce enolpyruvyl shikimate-3-phosphate and inorganic phosphate. This is 3-phosphoshikimate 1-carboxyvinyltransferase from Carboxydothermus hydrogenoformans (strain ATCC BAA-161 / DSM 6008 / Z-2901).